The following is a 308-amino-acid chain: Ribosomal RNA large subunit methyltransferase F (308 aa).

Residues 190 to 212 (DSAASARAGSERKRRNLGQDKND) are disordered.

Belongs to the methyltransferase superfamily. METTL16/RlmF family.

The protein localises to the cytoplasm. It catalyses the reaction adenosine(1618) in 23S rRNA + S-adenosyl-L-methionine = N(6)-methyladenosine(1618) in 23S rRNA + S-adenosyl-L-homocysteine + H(+). In terms of biological role, specifically methylates the adenine in position 1618 of 23S rRNA. In Citrobacter koseri (strain ATCC BAA-895 / CDC 4225-83 / SGSC4696), this protein is Ribosomal RNA large subunit methyltransferase F.